A 102-amino-acid polypeptide reads, in one-letter code: Protamine-2 (102 aa).

Phosphoserine is present on residues Ser-8, Ser-10, and Ser-37. Disordered stretches follow at residues 15–41 (EVYG…PEQV) and 66–102 (IHRQ…CRRH).

The protein belongs to the protamine P2 family. Interacts with TDRP. Post-translationally, proteolytic processing into mature chains is required for histone eviction during spermatogenesis. Transition proteins (TNP1 and TNP2) are required for processing. In terms of tissue distribution, testis.

The protein localises to the nucleus. It localises to the chromosome. Protamines substitute for histones in the chromatin of sperm during the haploid phase of spermatogenesis. They compact sperm DNA into a highly condensed, stable and inactive complex. The sequence is that of Protamine-2 (PRM2) from Pongo pygmaeus (Bornean orangutan).